The chain runs to 388 residues: Pepsin A-2/A-3 (388 aa).

An N-terminal signal peptide occupies residues 1 to 15 (MKWLLLLGLVALSEC). Propeptides (activation peptide) lie at residues 16–40 (IIHK…LLKD) and 41–62 (FLKK…APTL). The 310-residue stretch at 76 to 385 (YFGTIGIGTP…DRANNQVGLA (310 aa)) folds into the Peptidase A1 domain. Residue Asp-94 is part of the active site. Cys-107 and Cys-112 are disulfide-bonded. At Ser-130 the chain carries Phosphoserine. Cys-268 and Cys-272 are joined by a disulfide. Asp-277 is a catalytic residue. Cys-311 and Cys-344 are oxidised to a cystine.

Belongs to the peptidase A1 family. Post-translationally, pepsin A-2 is phosphorylated, but not pepsin A-3. In terms of processing, each pepsinogen is converted to corresponding pepsin at pH 2.0 in part as a result of the release of a 47 AA activation segment and in part as a result of stepwise proteolytic cleavage via an intermediate form(s).

It localises to the secreted. The catalysed reaction is Preferential cleavage: hydrophobic, preferably aromatic, residues in P1 and P1' positions. Cleaves 1-Phe-|-Val-2, 4-Gln-|-His-5, 13-Glu-|-Ala-14, 14-Ala-|-Leu-15, 15-Leu-|-Tyr-16, 16-Tyr-|-Leu-17, 23-Gly-|-Phe-24, 24-Phe-|-Phe-25 and 25-Phe-|-Tyr-26 bonds in the B chain of insulin.. Functionally, shows particularly broad specificity; although bonds involving phenylalanine and leucine are preferred, many others are also cleaved to some extent. This chain is Pepsin A-2/A-3, found in Macaca fuscata fuscata (Japanese macaque).